The primary structure comprises 279 residues: NADPH-dependent 7-cyano-7-deazaguanine reductase (279 aa).

86-88 (IES) is a substrate binding site. 88–89 (SK) contributes to the NADPH binding site. The Thioimide intermediate role is filled by C187. D194 (proton donor) is an active-site residue. A substrate-binding site is contributed by 226 to 227 (HE). Residue 255–256 (RG) participates in NADPH binding.

Belongs to the GTP cyclohydrolase I family. QueF type 2 subfamily. In terms of assembly, homodimer.

The protein localises to the cytoplasm. It carries out the reaction 7-aminomethyl-7-carbaguanine + 2 NADP(+) = 7-cyano-7-deazaguanine + 2 NADPH + 3 H(+). It participates in tRNA modification; tRNA-queuosine biosynthesis. Its function is as follows. Catalyzes the NADPH-dependent reduction of 7-cyano-7-deazaguanine (preQ0) to 7-aminomethyl-7-deazaguanine (preQ1). The chain is NADPH-dependent 7-cyano-7-deazaguanine reductase from Haemophilus influenzae (strain PittGG).